Reading from the N-terminus, the 394-residue chain is Elongation factor Tu (394 aa).

Residues 10-204 enclose the tr-type G domain; that stretch reads KPHVNVGTIG…ALDSYIPEPE (195 aa). The tract at residues 19–26 is G1; it reads GHVDHGKT. 19–26 lines the GTP pocket; it reads GHVDHGKT. Mg(2+) is bound at residue Thr26. A G2 region spans residues 60 to 64; that stretch reads GITIS. Residues 81-84 form a G3 region; the sequence is DCPG. Residues 81–85 and 136–139 contribute to the GTP site; these read DCPGH and NKCD. A G4 region spans residues 136–139; sequence NKCD. The interval 174–176 is G5; the sequence is SAL.

Belongs to the TRAFAC class translation factor GTPase superfamily. Classic translation factor GTPase family. EF-Tu/EF-1A subfamily. Monomer.

The protein localises to the cytoplasm. It carries out the reaction GTP + H2O = GDP + phosphate + H(+). GTP hydrolase that promotes the GTP-dependent binding of aminoacyl-tRNA to the A-site of ribosomes during protein biosynthesis. The protein is Elongation factor Tu of Alteromonas mediterranea (strain DSM 17117 / CIP 110805 / LMG 28347 / Deep ecotype).